The primary structure comprises 337 residues: Holliday junction branch migration complex subunit RuvB (337 aa).

The segment at A4–Y185 is large ATPase domain (RuvB-L). ATP-binding positions include I24, R25, G66, K69, T70, T71, E132–Y134, R175, Y185, and R222. Mg(2+) is bound at residue T70. The small ATPAse domain (RuvB-S) stretch occupies residues K186–D256. Positions S259–R337 are head domain (RuvB-H). Positions 314 and 319 each coordinate DNA.

The protein belongs to the RuvB family. Homohexamer. Forms an RuvA(8)-RuvB(12)-Holliday junction (HJ) complex. HJ DNA is sandwiched between 2 RuvA tetramers; dsDNA enters through RuvA and exits via RuvB. An RuvB hexamer assembles on each DNA strand where it exits the tetramer. Each RuvB hexamer is contacted by two RuvA subunits (via domain III) on 2 adjacent RuvB subunits; this complex drives branch migration. In the full resolvosome a probable DNA-RuvA(4)-RuvB(12)-RuvC(2) complex forms which resolves the HJ.

The protein localises to the cytoplasm. The catalysed reaction is ATP + H2O = ADP + phosphate + H(+). Functionally, the RuvA-RuvB-RuvC complex processes Holliday junction (HJ) DNA during genetic recombination and DNA repair, while the RuvA-RuvB complex plays an important role in the rescue of blocked DNA replication forks via replication fork reversal (RFR). RuvA specifically binds to HJ cruciform DNA, conferring on it an open structure. The RuvB hexamer acts as an ATP-dependent pump, pulling dsDNA into and through the RuvAB complex. RuvB forms 2 homohexamers on either side of HJ DNA bound by 1 or 2 RuvA tetramers; 4 subunits per hexamer contact DNA at a time. Coordinated motions by a converter formed by DNA-disengaged RuvB subunits stimulates ATP hydrolysis and nucleotide exchange. Immobilization of the converter enables RuvB to convert the ATP-contained energy into a lever motion, pulling 2 nucleotides of DNA out of the RuvA tetramer per ATP hydrolyzed, thus driving DNA branch migration. The RuvB motors rotate together with the DNA substrate, which together with the progressing nucleotide cycle form the mechanistic basis for DNA recombination by continuous HJ branch migration. Branch migration allows RuvC to scan DNA until it finds its consensus sequence, where it cleaves and resolves cruciform DNA. In Photobacterium profundum (strain SS9), this protein is Holliday junction branch migration complex subunit RuvB.